The primary structure comprises 357 residues: NADH-quinone oxidoreductase subunit H (357 aa).

A run of 8 helical transmembrane segments spans residues 22-42 (VAII…LMLV), 94-114 (IYLF…VWAV), 130-150 (LLYV…AGWA), 164-184 (AALL…VVMI), 199-219 (GGII…FFIS), 254-274 (FFLA…IMFF), 294-314 (IPGM…YLWV), and 333-353 (VFLP…QLQL).

Belongs to the complex I subunit 1 family. As to quaternary structure, NDH-1 is composed of 14 different subunits. Subunits NuoA, H, J, K, L, M, N constitute the membrane sector of the complex.

It localises to the cell inner membrane. It carries out the reaction a quinone + NADH + 5 H(+)(in) = a quinol + NAD(+) + 4 H(+)(out). In terms of biological role, NDH-1 shuttles electrons from NADH, via FMN and iron-sulfur (Fe-S) centers, to quinones in the respiratory chain. The immediate electron acceptor for the enzyme in this species is believed to be ubiquinone. Couples the redox reaction to proton translocation (for every two electrons transferred, four hydrogen ions are translocated across the cytoplasmic membrane), and thus conserves the redox energy in a proton gradient. This subunit may bind ubiquinone. This chain is NADH-quinone oxidoreductase subunit H, found in Vesicomyosocius okutanii subsp. Calyptogena okutanii (strain HA).